The sequence spans 471 residues: UDP-N-acetylmuramate--L-alanine ligase (471 aa).

114 to 120 (GTHGKTT) serves as a coordination point for ATP.

Belongs to the MurCDEF family.

Its subcellular location is the cytoplasm. It catalyses the reaction UDP-N-acetyl-alpha-D-muramate + L-alanine + ATP = UDP-N-acetyl-alpha-D-muramoyl-L-alanine + ADP + phosphate + H(+). It participates in cell wall biogenesis; peptidoglycan biosynthesis. Cell wall formation. The protein is UDP-N-acetylmuramate--L-alanine ligase of Rhizobium meliloti (strain 1021) (Ensifer meliloti).